The following is a 248-amino-acid chain: 5'-nucleotidase SurE (248 aa).

A divalent metal cation contacts are provided by D8, D9, S39, and N91.

The protein belongs to the SurE nucleotidase family. Requires a divalent metal cation as cofactor.

It localises to the cytoplasm. The enzyme catalyses a ribonucleoside 5'-phosphate + H2O = a ribonucleoside + phosphate. Nucleotidase that shows phosphatase activity on nucleoside 5'-monophosphates. The polypeptide is 5'-nucleotidase SurE (Marinomonas sp. (strain MWYL1)).